A 192-amino-acid polypeptide reads, in one-letter code: RNA-free ribonuclease P (192 aa).

Belongs to the HARP family.

It carries out the reaction Endonucleolytic cleavage of RNA, removing 5'-extranucleotides from tRNA precursor.. In terms of biological role, RNA-free RNase P that catalyzes the removal of the 5'-leader sequence from pre-tRNA to produce the mature 5'-terminus. This chain is RNA-free ribonuclease P, found in Alkalilimnicola ehrlichii (strain ATCC BAA-1101 / DSM 17681 / MLHE-1).